Consider the following 559-residue polypeptide: Tryprostatin B 6-hydroxylase (559 aa).

The next 3 membrane-spanning stretches (helical) occupy residues 13–35, 48–65, and 82–104; these read PSVM…HLSY, YVRF…LLYA, and VSLL…RTLF. Cys-502 is a heme binding site.

This sequence belongs to the cytochrome P450 family. Requires heme as cofactor.

It is found in the membrane. It catalyses the reaction tryprostatin B + reduced [NADPH--hemoprotein reductase] + O2 = 6-hydroxytryprostatin B + oxidized [NADPH--hemoprotein reductase] + H2O + H(+). It functions in the pathway mycotoxin biosynthesis. Functionally, cytochrome P450 monooxygenase; part of the gene cluster that mediates the biosynthesis of fumitremorgins, indole alkaloids that carry not only intriguing chemical structures, but also interesting biological and pharmacological activities. The biosynthesis of fumitremorgin-type alkaloids begins by condensation of the two amino acids L-tryptophan and L-proline to brevianamide F, catalyzed by the non-ribosomal peptide synthetase ftmA. Brevianamide F is then prenylated by the prenyltransferase ftmPT1/ftmB in the presence of dimethylallyl diphosphate, resulting in the formation of tryprostatin B. The three cytochrome P450 monooxygenases, ftmP450-1/ftmC, ftmP450-2/ftmE and ftmP450-3/FtmG, are responsible for the conversion of tryprostatin B to 6-hydroxytryprostatin B, tryprostatin A to fumitremorgin C and fumitremorgin C to 12,13-dihydroxyfumitremorgin C, respectively. The putative methyltransferase ftmMT/ftmD is expected for the conversion of 6-hydroxytryprostatin B to tryprostatin A. FtmPT2/FtmH catalyzes the prenylation of 12,13-dihydroxyfumitre-morgin C in the presence of dimethylallyl diphosphate, resulting in the formation of fumitremorgin B. Fumitremorgin B is further converted to verruculogen by ftmOx1/ftmF via the insertion of an endoperoxide bond between the two prenyl moieties. In some fungal species, verruculogen is further converted to fumitremorgin A, but the enzymes involved in this step have not been identified yet. This Aspergillus fumigatus (Neosartorya fumigata) protein is Tryprostatin B 6-hydroxylase.